A 546-amino-acid chain; its full sequence is Tryptophan biosynthesis protein TrpCD (546 aa).

The tract at residues 1-226 (MMDFGFVDSL…FVQTVCGGEK (226 aa)) is indole-3-glycerol phosphate synthase. Positions 227 to 546 (MIEDVLRGLD…EEIACKSTSM (320 aa)) are anthranilate phosphoribosyltransferase. 5-phospho-alpha-D-ribose 1-diphosphate is bound by residues Gly-295, 298-299 (GD), Ser-303, 305-308 (NVST), 322-330 (KHGNRAVSS), and Ser-334. Gly-295 is an anthranilate binding site. Ser-307 contributes to the Mg(2+) binding site. Asn-325 lines the anthranilate pocket. Arg-380 lines the anthranilate pocket. Mg(2+) contacts are provided by Asp-437 and Glu-438.

It in the N-terminal section; belongs to the TrpC family. In the C-terminal section; belongs to the anthranilate phosphoribosyltransferase family. It depends on Mg(2+) as a cofactor.

It catalyses the reaction 1-(2-carboxyphenylamino)-1-deoxy-D-ribulose 5-phosphate + H(+) = (1S,2R)-1-C-(indol-3-yl)glycerol 3-phosphate + CO2 + H2O. The catalysed reaction is N-(5-phospho-beta-D-ribosyl)anthranilate + diphosphate = 5-phospho-alpha-D-ribose 1-diphosphate + anthranilate. The protein operates within amino-acid biosynthesis; L-tryptophan biosynthesis; L-tryptophan from chorismate: step 2/5. Its pathway is amino-acid biosynthesis; L-tryptophan biosynthesis; L-tryptophan from chorismate: step 4/5. Functionally, bifunctional enzyme that catalyzes the second and fourth steps of tryptophan biosynthetic pathway. The second step is catalyzed by the anthranilate phosphoribosyltransferase, coded by the TrpD domain and the fourth step is catalyzed by indole-3-glycerol phosphate synthase, coded by the TrpC domain. This is Tryptophan biosynthesis protein TrpCD (trpCD) from Archaeoglobus fulgidus (strain ATCC 49558 / DSM 4304 / JCM 9628 / NBRC 100126 / VC-16).